A 906-amino-acid polypeptide reads, in one-letter code: Aconitate hydratase A (906 aa).

Residues Cys443, Cys509, and Cys512 each coordinate [4Fe-4S] cluster.

This sequence belongs to the aconitase/IPM isomerase family. In terms of assembly, monomer. The cofactor is [4Fe-4S] cluster.

The catalysed reaction is citrate = D-threo-isocitrate. It carries out the reaction (2S,3R)-3-hydroxybutane-1,2,3-tricarboxylate = 2-methyl-cis-aconitate + H2O. It participates in carbohydrate metabolism; tricarboxylic acid cycle; isocitrate from oxaloacetate: step 2/2. The protein operates within organic acid metabolism; propanoate degradation. Involved in the catabolism of short chain fatty acids (SCFA) via the tricarboxylic acid (TCA)(acetyl degradation route) and probably via the 2-methylcitrate cycle I (propionate degradation route). Catalyzes the reversible isomerization of citrate to isocitrate via cis-aconitate. Could catalyze the hydration of 2-methyl-cis-aconitate to yield (2R,3S)-2-methylisocitrate. The apo form of AcnA functions as a RNA-binding regulatory protein. The protein is Aconitate hydratase A of Bradyrhizobium diazoefficiens (strain JCM 10833 / BCRC 13528 / IAM 13628 / NBRC 14792 / USDA 110).